The sequence spans 439 residues: Histone acetyltransferase GCN5 (439 aa).

2 stretches are compositionally biased toward basic and acidic residues: residues 1–28 (MVTK…KLEN) and 39–59 (ETNK…KETE). The segment at 1–59 (MVTKHQIEEDHLDGATTDPEVKRVKLENNVEEIQPEQAETNKQEGTDKENKGKFEKETE) is disordered. An N-acetyltransferase domain is found at 100–255 (IEFRVVNNDN…GGTLMQCSML (156 aa)). Glu-173 acts as the Proton donor/acceptor in catalysis. Residues 177 to 179 (CAI), 184 to 190 (QVRGYGA), and 216 to 219 (YAIG) contribute to the acetyl-CoA site. Residues 327-431 (PKRGPHDAAI…KFFNNKVKEI (105 aa)) enclose the Bromo domain.

It belongs to the acetyltransferase family. GCN5 subfamily. As to quaternary structure, component of the 1.8 MDa SAGA (Spt-Ada-Gcn5 acetyltransferase) complex, which is composed of 19 subunits TRA1, SPT7, TAF5, NGG1/ADA3, SGF73, SPT20/ADA5, SPT8, TAF12, TAF6, HFI1/ADA1, UBP8, GCN5, ADA2, SPT3, SGF29, TAF10, TAF9, SGF11 and SUS1. The SAGA complex is composed of 4 modules, namely the HAT (histone acetyltransferase) module (GCN5, ADA2, NGG1/ADA3 and SGF29), the DUB (deubiquitinating) module (UBP8, SGF11, SGF73 and SUS1), the core or TAF (TBP-associated factor) module (TAF5, TAF6, TAF9, TAF10 and TAF12), and the Tra1 or SPT (Suppressor of Ty) module (TRA1, HFI1/ADA1, SPT3, SPT7, SPT8 and SPT20/ADA5). The Tra1/SPT module binds activators, the core module recruits TBP (TATA-binding protein), the HAT module contains the histone H3 acetyltransferase GCN5, and the DUB module comprises the histone H2B deubiquitinase UBP8. Also identified in an altered form of SAGA, named SALSA (SAGA altered, Spt8 absent) or SLIK (SAGA-like) complex, which contains a C-terminal truncated form of SPT7 and is missing SPT8. However, it has been shown that the SAGA and SAGA-like SALSA/SLIK transcriptional coactivators are structurally and biochemically equivalent. Component of the 0.8 MDa ADA complex, a HAT complex distinct from SAGA, which at least consists of ADA2, NGG1/ADA3, AHC1, AHC2, SGF29 and GCN5. Component of an ADA/GCN5 complex that consists of HFI1/ADA1, ADA2, NGG1/ADA3, SPT20/ADA5 and GCN5 and probably is a subcomplex of SAGA.

It localises to the nucleus. The protein localises to the cytoplasm. The catalysed reaction is L-lysyl-[protein] + acetyl-CoA = N(6)-acetyl-L-lysyl-[protein] + CoA + H(+). It catalyses the reaction (2E)-butenoyl-CoA + L-lysyl-[protein] = N(6)-(2E)-butenoyl-L-lysyl-[protein] + CoA + H(+). Its function is as follows. Histone acetyltransferase that acetylates histone H2B to form H2BK11ac and H2BK16ac, histone H3 to form H3K9ac, H3K14ac, H3K18ac, H3K23ac, H3K27ac and H3K36ac, with a lower preference histone H4 to form H4K8ac and H4K16ac, and contributes to H2A.Z acetylation. Acetylation of histones gives a specific tag for epigenetic transcription activation and elongation. Operates in concert with certain DNA-binding transcriptional activators such as GCN4 or HAP2/3/4. Its acetyltransferase activity seems to be dependent on the association in different multisubunit complexes. Component of the transcription coactivator SAGA complex. SAGA acts as a general cofactor required for essentially all RNA polymerase II transcription. At the promoters, SAGA is required for transcription pre-initiation complex (PIC) recruitment. It influences RNA polymerase II transcriptional activity through different activities such as TBP interaction (via core/TAF module) and promoter selectivity, interaction with transcription activators (via Tra1/SPT module), and chromatin modification through histone acetylation (via HAT module) and deubiquitination (via DUB module). SAGA preferentially acetylates histones H3 (to form H3K9ac, H3K14ac, H3K18ac and H3K23ac) and H2B and deubiquitinates histone H2B. SAGA interacts with DNA via upstream activating sequences (UASs). Also identified in a modified version of SAGA named SALSA or SLIK. The cleavage of SPT7 and the absence of the SPT8 subunit in SLIK neither drive any major conformational differences in its structure compared with SAGA, nor significantly affect HAT, DUB, or DNA-binding activities. Component of the ADA histone acetyltransferase complex, which preferentially acetylates nucleosomal histones H3 (to form H3K14ac and H3K18ac) and H2B. In addition to histone acetyltransferase, can use different acyl-CoA substrates, such as (2E)-butenoyl-CoA (crotonyl-CoA) and is able to mediate histone crotonylation. Controls the metaphase-to-anaphase transition and is required for correct chromosome segregation and centromere/kinetochore function in mitosis. May be involved in response to DNA damage by genotoxic agents. The chain is Histone acetyltransferase GCN5 from Saccharomyces cerevisiae (strain ATCC 204508 / S288c) (Baker's yeast).